The sequence spans 465 residues: Cysteine--tRNA ligase (465 aa).

C29 contacts Zn(2+). Residues 31-41 (PTVYNYIHIGN) carry the 'HIGH' region motif. 3 residues coordinate Zn(2+): C209, H234, and E238. Positions 266 to 270 (KMSKS) match the 'KMSKS' region motif. ATP is bound at residue K269. Position 270 is a phosphoserine (S270).

It belongs to the class-I aminoacyl-tRNA synthetase family. In terms of assembly, monomer. Requires Zn(2+) as cofactor.

Its subcellular location is the cytoplasm. The catalysed reaction is tRNA(Cys) + L-cysteine + ATP = L-cysteinyl-tRNA(Cys) + AMP + diphosphate. This Bacillus cereus (strain ATCC 10987 / NRS 248) protein is Cysteine--tRNA ligase.